Here is a 188-residue protein sequence, read N- to C-terminus: PRA1 family protein 3 (188 aa).

At methionine 1 the chain carries N-acetylmethionine. Over 1-35 (MDVNIAPLRAWDDFFPGSDRFARPDFRDISKWNNR) the chain is Cytoplasmic. 2 helical membrane passes run 36–56 (VVSNLLYYQTNYLVVAAMMIS) and 57–77 (VVGFLSPFNMILGGIVVVLVF). Residues 78–93 (TGFVWAAHNKDILRRL) lie on the Cytoplasmic side of the membrane. Helical transmembrane passes span 94–114 (KKQYPTVFVMVVMLASYFLIS) and 115–135 (MFGGVMVFVFGITFPLLLMFI). The interval 103–117 (MVVMLASYFLISMFG) is required for homodimer formation and heterodimer formation with ARL6IP1. Topologically, residues 136–188 (HASLRLRNLKNKLENKIEGIGLKRTPMGIVLDALEQQEENISKFADYISKVNE) are cytoplasmic. The interval 136-188 (HASLRLRNLKNKLENKIEGIGLKRTPMGIVLDALEQQEENISKFADYISKVNE) is targeting to endoplasmic reticulum membrane.

It belongs to the PRA1 family. In terms of assembly, homodimer. Heterodimer with ARL6IP1. Forms multimers. Interacts with ARL6. Interacts with prenylated RAB1A and RAB3A. Interacts with SLC1A1/EAAC1. Interacts with RTN2 (via first transmembrane domain). Does not interact with VAMP1, VAMP2 or VAMP3.

Its subcellular location is the endoplasmic reticulum membrane. The protein localises to the cell membrane. It localises to the cytoplasm. The protein resides in the cytoskeleton. Functionally, regulates intracellular concentrations of taurine and glutamate. Negatively modulates SLC1A1/EAAC1 glutamate transport activity by decreasing its affinity for glutamate in a PKC activity-dependent manner. Plays a role in the retention of SLC1A1/EAAC1 in the endoplasmic reticulum. The chain is PRA1 family protein 3 (ARL6IP5) from Sus scrofa (Pig).